Reading from the N-terminus, the 154-residue chain is CASP-like protein 5B2 (154 aa).

Residues 1-17 are Cytoplasmic-facing; that stretch reads MAGLAGRPGSWGGLVLR. Residues 18 to 38 traverse the membrane as a helical segment; sequence VGQALFAAACIGVMGSSLGFA. Topologically, residues 39–42 are extracellular; that stretch reads SYTA. Residues 43-63 form a helical membrane-spanning segment; the sequence is FCYLIASMGLQMLWSFGLACL. At 64-87 the chain is on the cytoplasmic side; sequence DGYAIRANKDLTSPILLSLFVVGD. A helical membrane pass occupies residues 88–107; that stretch reads WVTAILSFAASSSAAGVVIL. Residues 108–130 lie on the Extracellular side of the membrane; that stretch reads FQKDVLFCRRYPQLPCGKYELAT. Residues 131-151 traverse the membrane as a helical segment; that stretch reads AFAFLSWALSATSALIMFWLL. Residues 152 to 154 lie on the Cytoplasmic side of the membrane; that stretch reads AAF.

This sequence belongs to the Casparian strip membrane proteins (CASP) family. Homodimer and heterodimers.

The protein resides in the cell membrane. This is CASP-like protein 5B2 from Zea mays (Maize).